The following is a 363-amino-acid chain: MKESVIRKLEGLLERNEEVLALLSDASIISDQDRFRALSKEYAQLEDVVKGFKAYQQAVADLETAKEMLEEDDPELKEMAQEEIKSAKASLERLEAELQILLLPKDPNDEANAFVEIRAGAGGDEAAIFAGDLFRMYSRYAETQRWQVEIMSANEGEHGGYKEVIARFSGERVYGKLKFESGGHRVQRVPETESQGRVHTSACTVAVLHEVPEAEAVEINPSELRIDTFRASGAGGQHVNKTDSAIRITHLPTGTVVECQDERSQHKNKARAMSVLVARLQAAEDEKRRSAEATTRRNLVGSGDRSERIRTYNFPQGRVSDHRINLTLYRLNEVMEGDLNALIEPIVQEHQADLLAALADEQG.

The residue at position 237 (Gln237) is an N5-methylglutamine. The segment covering 286-295 (EKRRSAEATT) has biased composition (basic and acidic residues). A disordered region spans residues 286–305 (EKRRSAEATTRRNLVGSGDR).

The protein belongs to the prokaryotic/mitochondrial release factor family. In terms of processing, methylated by PrmC. Methylation increases the termination efficiency of RF1.

The protein resides in the cytoplasm. Peptide chain release factor 1 directs the termination of translation in response to the peptide chain termination codons UAG and UAA. The sequence is that of Peptide chain release factor 1 from Shewanella amazonensis (strain ATCC BAA-1098 / SB2B).